Reading from the N-terminus, the 395-residue chain is Lipoyl synthase, mitochondrial (395 aa).

Residues 1 to 24 (MVKLPSASRIRSLATVPSTATRAF) constitute a mitochondrion transit peptide. [4Fe-4S] cluster contacts are provided by Cys107, Cys112, Cys118, Cys137, Cys141, Cys144, and Ser357. In terms of domain architecture, Radical SAM core spans 122–346 (GKGNATATIM…KNVAEGMGFL (225 aa)).

This sequence belongs to the radical SAM superfamily. Lipoyl synthase family. Requires [4Fe-4S] cluster as cofactor.

The protein localises to the mitochondrion. The enzyme catalyses [[Fe-S] cluster scaffold protein carrying a second [4Fe-4S](2+) cluster] + N(6)-octanoyl-L-lysyl-[protein] + 2 oxidized [2Fe-2S]-[ferredoxin] + 2 S-adenosyl-L-methionine + 4 H(+) = [[Fe-S] cluster scaffold protein] + N(6)-[(R)-dihydrolipoyl]-L-lysyl-[protein] + 4 Fe(3+) + 2 hydrogen sulfide + 2 5'-deoxyadenosine + 2 L-methionine + 2 reduced [2Fe-2S]-[ferredoxin]. The protein operates within protein modification; protein lipoylation via endogenous pathway; protein N(6)-(lipoyl)lysine from octanoyl-[acyl-carrier-protein]: step 2/2. Its function is as follows. Catalyzes the radical-mediated insertion of two sulfur atoms into the C-6 and C-8 positions of the octanoyl moiety bound to the lipoyl domains of lipoate-dependent enzymes, thereby converting the octanoylated domains into lipoylated derivatives. This is Lipoyl synthase, mitochondrial from Cryptococcus neoformans var. neoformans serotype D (strain B-3501A) (Filobasidiella neoformans).